Consider the following 792-residue polypeptide: Oxidoreductase cns1 (792 aa).

As to quaternary structure, interacts with cns2.

It is found in the lipid droplet. The protein operates within secondary metabolite biosynthesis. In terms of biological role, oxidoreductase; part of the gene cluster that mediates the biosynthesis of cordycepin (COR) and pentostatin (PTN), two adenosine analogs with related bioactivity profiles as both mimic adenosine and can inhibit some of the processes that are adenosine dependent. Within the pathway, cns1 catalyzes the last step by converting the cns2 product 2'-carbonyl-3'-deoxyadenosine (2'-C-3'-dA) into cordycepin (3'-deoxyadenosine). The first step of cordycepin biosynthesis involves hydroxyl phosphorylation of the 3'-OH position on adenosine to produce adenosine-3'-monophosphate (3'-AMP), catalyzed by kinase activity of cns3. Next, 3'-AMP is dephosphorylated to 2'-carbonyl-3'-deoxyadenosine by cns2, which is finally converted to cordycepin by the oxidoreductase cns1. Pentostatin production is mediated by the ATP phosphoribosyltransferase activity of cns3 on adenosine to inhibit the activity of adenosine deaminase (ADA) to prevent COR deamination to 3'-deoxyinosine (3'-dI). In Cordyceps militaris (strain CM01) (Caterpillar fungus), this protein is Oxidoreductase cns1.